The sequence spans 287 residues: Elongation factor Ts (287 aa).

Residues 80–83 (TDFL) form an involved in Mg(2+) ion dislocation from EF-Tu region.

This sequence belongs to the EF-Ts family.

The protein resides in the cytoplasm. Its function is as follows. Associates with the EF-Tu.GDP complex and induces the exchange of GDP to GTP. It remains bound to the aminoacyl-tRNA.EF-Tu.GTP complex up to the GTP hydrolysis stage on the ribosome. This Ectopseudomonas mendocina (strain ymp) (Pseudomonas mendocina) protein is Elongation factor Ts.